Reading from the N-terminus, the 150-residue chain is MESANASTSATTIDQLCKTFNLSMHTLQINCVFCKNALTTAEIYSYAYKQLKVLFRGGYPYAACACCLEFHGKINQYRHFDYAGYATTVEEETKQDILDVLIRCYLCHKPLCEVEKVKHILTKARFIKLNCTWKGRCLHCWTTCMEDMLP.

2 zinc fingers span residues 31–67 (CVFC…CACC) and 104–140 (CYLC…CLHC).

Belongs to the papillomaviridae E6 protein family. As to quaternary structure, forms homodimers. Interacts with ubiquitin-protein ligase UBE3A/E6-AP; this interaction stimulates UBE3A ubiquitin activity. Interacts with host TP53 and EP300; this interaction inhibits TP53 activity. Interacts with human ZYX.

The protein localises to the host cytoplasm. It is found in the host nucleus. Plays a major role in the induction and maintenance of cellular transformation. E6 associates with host UBE3A/E6-AP ubiquitin-protein ligase and modulates its activity. Sequesters tumor suppressor TP53 in the host cytoplasm and modulates its activity by interacting with host EP300 that results in the reduction of TP53 acetylation and activation. In turn, apoptosis induced by DNA damage is inhibited. E6 also protects host keratinocytes from apoptosis by mediating the degradation of host BAK1. May also inhibit host immune response. The protein is Protein E6 of Human papillomavirus type 6a.